The primary structure comprises 443 residues: Thymidine phosphorylase (443 aa).

The protein belongs to the thymidine/pyrimidine-nucleoside phosphorylase family. Homodimer.

It catalyses the reaction thymidine + phosphate = 2-deoxy-alpha-D-ribose 1-phosphate + thymine. It functions in the pathway pyrimidine metabolism; dTMP biosynthesis via salvage pathway; dTMP from thymine: step 1/2. Functionally, the enzymes which catalyze the reversible phosphorolysis of pyrimidine nucleosides are involved in the degradation of these compounds and in their utilization as carbon and energy sources, or in the rescue of pyrimidine bases for nucleotide synthesis. This chain is Thymidine phosphorylase, found in Shewanella sediminis (strain HAW-EB3).